The following is a 185-amino-acid chain: Peptidyl-tRNA hydrolase (185 aa).

Tyr-14 is a tRNA binding site. His-19 acts as the Proton acceptor in catalysis. Residues Tyr-65, Asn-67, and Asn-113 each contribute to the tRNA site.

Belongs to the PTH family. Monomer.

The protein localises to the cytoplasm. The enzyme catalyses an N-acyl-L-alpha-aminoacyl-tRNA + H2O = an N-acyl-L-amino acid + a tRNA + H(+). In terms of biological role, hydrolyzes ribosome-free peptidyl-tRNAs (with 1 or more amino acids incorporated), which drop off the ribosome during protein synthesis, or as a result of ribosome stalling. Functionally, catalyzes the release of premature peptidyl moieties from peptidyl-tRNA molecules trapped in stalled 50S ribosomal subunits, and thus maintains levels of free tRNAs and 50S ribosomes. The polypeptide is Peptidyl-tRNA hydrolase (Rickettsia typhi (strain ATCC VR-144 / Wilmington)).